A 307-amino-acid chain; its full sequence is Elongation factor Ts (307 aa).

Residues 79–82 (TDFV) are involved in Mg(2+) ion dislocation from EF-Tu.

It belongs to the EF-Ts family.

The protein localises to the cytoplasm. Functionally, associates with the EF-Tu.GDP complex and induces the exchange of GDP to GTP. It remains bound to the aminoacyl-tRNA.EF-Tu.GTP complex up to the GTP hydrolysis stage on the ribosome. This Bartonella tribocorum (strain CIP 105476 / IBS 506) protein is Elongation factor Ts.